The primary structure comprises 288 residues: NAD(P)H-hydrate epimerase (288 aa).

The transit peptide at 1 to 32 (MSGLRALLGLGLLVAGSRLSRVRVQAGSCRAG) directs the protein to the mitochondrion. Residue serine 49 is modified to Phosphoserine. The 211-residue stretch at 65–275 (AQAVDQELFN…ALEKKYQLNL (211 aa)) folds into the YjeF N-terminal domain. 119-123 (NNGGD) serves as a coordination point for (6S)-NADPHX. Residue asparagine 120 participates in K(+) binding. Lysine 144 is subject to N6-succinyllysine. Residue aspartate 185 coordinates K(+). (6S)-NADPHX contacts are provided by residues 189–195 (GFSFTGE) and aspartate 218. Serine 221 contributes to the K(+) binding site.

It belongs to the NnrE/AIBP family. As to quaternary structure, homodimer. Interacts with APOA1 and APOA2. Requires K(+) as cofactor. Undergoes physiological phosphorylation during sperm capacitation, downstream to PKA activation.

Its subcellular location is the mitochondrion. It is found in the secreted. The catalysed reaction is (6R)-NADHX = (6S)-NADHX. It carries out the reaction (6R)-NADPHX = (6S)-NADPHX. Its function is as follows. Catalyzes the epimerization of the S- and R-forms of NAD(P)HX, a damaged form of NAD(P)H that is a result of enzymatic or heat-dependent hydration. This is a prerequisite for the S-specific NAD(P)H-hydrate dehydratase to allow the repair of both epimers of NAD(P)HX. Accelerates cholesterol efflux from endothelial cells to high-density lipoprotein (HDL) and thereby regulates angiogenesis. The sequence is that of NAD(P)H-hydrate epimerase from Bos taurus (Bovine).